A 458-amino-acid chain; its full sequence is MSTGKTVQIIGAVVDVEFPRESIPKVYHALRIDDVGLTLEVQQQLGDGVVRTIAMGGSDGLRRGMAVTNTGAPISVPVGTKTLGRIMDVLGEPVDEAGPVGEEERWSIHRKAPAYEELSPATELLETGIKVIDLICPFAKGGKVGLFGGAGVGKTVNMMELIRNIATEHSGYSVFAGVGERTREGNDFYHEMKDSQVLDKVSLVYGQMNEPPGNRLRVALTGLTMAEFFREEGRDVLLFVDNIYRYTLAGTEVSALLGRMPSAVGYQPTLAEEMGVLQERITSTKTGSITSIQAVYVPADDLTDPSPATTFAHLDATVVLSRQIAELGIYPAVDPLDSTSRQLDPLIVGQEHYQVARAVQGNLQRYKELKDIIAILGMDELSEEDKLTVSRARKIQRFLSQPFFVAEVFTGSPGKYVPLKETIQSFKGIVEGEYDHLPEQAFYMVGTIDEAVEKAKKL.

148–155 (GGAGVGKT) is a binding site for ATP.

It belongs to the ATPase alpha/beta chains family. As to quaternary structure, F-type ATPases have 2 components, CF(1) - the catalytic core - and CF(0) - the membrane proton channel. CF(1) has five subunits: alpha(3), beta(3), gamma(1), delta(1), epsilon(1). CF(0) has three main subunits: a(1), b(2) and c(9-12). The alpha and beta chains form an alternating ring which encloses part of the gamma chain. CF(1) is attached to CF(0) by a central stalk formed by the gamma and epsilon chains, while a peripheral stalk is formed by the delta and b chains.

Its subcellular location is the cell inner membrane. The enzyme catalyses ATP + H2O + 4 H(+)(in) = ADP + phosphate + 5 H(+)(out). Produces ATP from ADP in the presence of a proton gradient across the membrane. The catalytic sites are hosted primarily by the beta subunits. The polypeptide is ATP synthase subunit beta (Nitrosococcus oceani (strain ATCC 19707 / BCRC 17464 / JCM 30415 / NCIMB 11848 / C-107)).